The primary structure comprises 303 residues: tRNA dimethylallyltransferase (303 aa).

9–16 (GPTASGKS) is an ATP binding site. 11-16 (TASGKS) contributes to the substrate binding site. The interval 34–37 (DSKQ) is interaction with substrate tRNA.

Belongs to the IPP transferase family. As to quaternary structure, monomer. Requires Mg(2+) as cofactor.

The catalysed reaction is adenosine(37) in tRNA + dimethylallyl diphosphate = N(6)-dimethylallyladenosine(37) in tRNA + diphosphate. Functionally, catalyzes the transfer of a dimethylallyl group onto the adenine at position 37 in tRNAs that read codons beginning with uridine, leading to the formation of N6-(dimethylallyl)adenosine (i(6)A). The sequence is that of tRNA dimethylallyltransferase from Ehrlichia chaffeensis (strain ATCC CRL-10679 / Arkansas).